Consider the following 443-residue polypeptide: Probable serine transporter (443 aa).

Over M1–A48 the chain is Cytoplasmic. A helical transmembrane segment spans residues I49–L69. Residues L70–N110 are Periplasmic-facing. Residues W111 to S131 traverse the membrane as a helical segment. The Cytoplasmic portion of the chain corresponds to T132 to E149. Residues G150 to S170 form a helical membrane-spanning segment. Topologically, residues S171 to T182 are periplasmic. A helical membrane pass occupies residues G183 to W203. The Cytoplasmic segment spans residues H204 to L214. Residues G215 to I235 traverse the membrane as a helical segment. The Periplasmic segment spans residues Q236–N264. A helical transmembrane segment spans residues I265–M285. Residues G286–N297 are Cytoplasmic-facing. The next 2 membrane-spanning stretches (helical) occupy residues I298–V318 and V319–F339. Residues R340–R367 lie on the Cytoplasmic side of the membrane. A helical transmembrane segment spans residues G368 to L388. Residue S389 is a topological domain, periplasmic. A helical membrane pass occupies residues F390–V410. Over Y411 to G421 the chain is Cytoplasmic. Residues M422–F442 traverse the membrane as a helical segment. Residue S443 is a topological domain, periplasmic.

It belongs to the amino acid/polyamine transporter 2 family. SdaC/TdcC subfamily.

It is found in the cell inner membrane. Functionally, plays a role in L-cysteine detoxification. May transport both D- and L-serine. The polypeptide is Probable serine transporter (dlsT) (Escherichia coli (strain K12)).